We begin with the raw amino-acid sequence, 88 residues long: Exodeoxyribonuclease 7 small subunit (88 aa).

The segment at 69 to 88 is disordered; the sequence is DPMHPDDGEPFDPSLVSTSQ.

It belongs to the XseB family. Heterooligomer composed of large and small subunits.

The protein resides in the cytoplasm. It carries out the reaction Exonucleolytic cleavage in either 5'- to 3'- or 3'- to 5'-direction to yield nucleoside 5'-phosphates.. Its function is as follows. Bidirectionally degrades single-stranded DNA into large acid-insoluble oligonucleotides, which are then degraded further into small acid-soluble oligonucleotides. The polypeptide is Exodeoxyribonuclease 7 small subunit (Xylella fastidiosa (strain M23)).